The primary structure comprises 222 residues: UPF0502 protein SO_1867 (222 aa).

Residues 169-193 (EQVSATSLSADSPSADSNSLNAQDR) show a composition bias toward polar residues. The segment at 169–195 (EQVSATSLSADSPSADSNSLNAQDRQQ) is disordered.

The protein belongs to the UPF0502 family.

The polypeptide is UPF0502 protein SO_1867 (Shewanella oneidensis (strain ATCC 700550 / JCM 31522 / CIP 106686 / LMG 19005 / NCIMB 14063 / MR-1)).